A 401-amino-acid chain; its full sequence is Chalcone synthase 2 (401 aa).

C168 is an active-site residue.

Belongs to the thiolase-like superfamily. Chalcone/stilbene synthases family.

It carries out the reaction (E)-4-coumaroyl-CoA + 3 malonyl-CoA + 3 H(+) = 2',4,4',6'-tetrahydroxychalcone + 3 CO2 + 4 CoA. It participates in secondary metabolite biosynthesis; flavonoid biosynthesis. Its function is as follows. The primary product of this enzyme is 4,2',4',6'-tetrahydroxychalcone (also termed naringenin-chalcone or chalcone) which can under specific conditions spontaneously isomerize into naringenin. The polypeptide is Chalcone synthase 2 (CHS2) (Sorghum bicolor (Sorghum)).